A 219-amino-acid polypeptide reads, in one-letter code: Phosphatidylinositol phosphate synthase (219 aa).

29–32 is an a CDP-1,2-diacyl-sn-glycerol binding site; the sequence is NQLT. 2 consecutive transmembrane segments (helical) span residues 31–47 and 53–72; these read LTLVSAGLTVGVALLLI and IWAAVLTGLFAAFDMIDGTV. 2 residues coordinate Mg(2+): Asp66 and Asp69. Gly70, Arg74, and Thr80 together coordinate a CDP-1,2-diacyl-sn-glycerol. Residues Asp87 and Asp91 each coordinate Mg(2+). Catalysis depends on Asp91, which acts as the Proton acceptor. Helical transmembrane passes span 93–110, 116–133, 154–171, and 177–194; these read ITDGALFGAITWWLVYSY, LVAASLVCLVASQVISYV, RLIVSLVGLGLTGMGVPY, and LWALAAGSIYTVVQRLVM.

It belongs to the CDP-alcohol phosphatidyltransferase class-I family. In terms of assembly, homodimer. Requires Mg(2+) as cofactor.

It localises to the cell membrane. It carries out the reaction a CDP-1,2-diacyl-sn-glycerol + 1D-myo-inositol 3-phosphate = a 1,2-diacyl-sn-glycero-3-phospho-(1D-myo-inositol-3-phosphate) + CMP + H(+). The enzyme catalyses 1,2-di-(9Z-octadecenoyl)-sn-glycero-3-cytidine-5'-diphosphate + 1D-myo-inositol 3-phosphate = 1,2-di-(9Z-octadecenoyl)-sn-glycero-3-phospho-(1D-myo-inositol-3-phosphate) + CMP + H(+). It participates in phospholipid metabolism; phosphatidylinositol phosphate biosynthesis. Catalyzes the conjugation of the 1'-hydroxyl group of D-myo-inositol-3-phosphate (also named L-myo-inositol-1-phosphate) with a lipid tail of cytidine diphosphate diacylglycerol (CDP-DAG), forming phosphatidylinositol phosphate (PIP) and CMP. PIP is a precursor of phosphatidylinositol (PI) which is an essential lipid required for cell wall formation. This is Phosphatidylinositol phosphate synthase from Corynebacterium glutamicum (strain ATCC 13032 / DSM 20300 / JCM 1318 / BCRC 11384 / CCUG 27702 / LMG 3730 / NBRC 12168 / NCIMB 10025 / NRRL B-2784 / 534).